The following is a 125-amino-acid chain: UPF0538 protein C2C4.04c (125 aa).

The protein belongs to the UPF0538 family.

The polypeptide is UPF0538 protein C2C4.04c (Schizosaccharomyces pombe (strain 972 / ATCC 24843) (Fission yeast)).